Here is a 442-residue protein sequence, read N- to C-terminus: GTPase Der (442 aa).

2 consecutive EngA-type G domains span residues 3–167 (PTIV…PADD) and 177–350 (PRVA…AAAM). GTP-binding positions include 9 to 16 (GRPNVGKS), 56 to 60 (DTAGF), 119 to 122 (NKAE), 183 to 190 (GRPNVGKS), 230 to 234 (DTAGL), and 295 to 298 (NKWD). Residues 351–435 (SNLSTPRLTR…PLRIQFRTAH (85 aa)) form the KH-like domain.

It belongs to the TRAFAC class TrmE-Era-EngA-EngB-Septin-like GTPase superfamily. EngA (Der) GTPase family. As to quaternary structure, associates with the 50S ribosomal subunit.

GTPase that plays an essential role in the late steps of ribosome biogenesis. In Azoarcus sp. (strain BH72), this protein is GTPase Der.